Consider the following 542-residue polypeptide: Probable protein kinase UbiB (542 aa).

Residues 123–505 (DFDEQALASA…ADNKTYNVKM (383 aa)) form the Protein kinase domain. Residues 129–137 (LASASIAQV) and K156 each bind ATP. The Proton acceptor role is filled by D291. A helical membrane pass occupies residues 506-526 (IIMGSIILSLLWQFNSLPLWL).

It belongs to the ABC1 family. UbiB subfamily.

It localises to the cell inner membrane. It participates in cofactor biosynthesis; ubiquinone biosynthesis [regulation]. In terms of biological role, is probably a protein kinase regulator of UbiI activity which is involved in aerobic coenzyme Q (ubiquinone) biosynthesis. The protein is Probable protein kinase UbiB of Haemophilus ducreyi (strain 35000HP / ATCC 700724).